The chain runs to 158 residues: S-ribosylhomocysteine lyase (158 aa).

His55, His59, and Cys127 together coordinate Fe cation.

Belongs to the LuxS family. As to quaternary structure, homodimer. Requires Fe cation as cofactor.

It catalyses the reaction S-(5-deoxy-D-ribos-5-yl)-L-homocysteine = (S)-4,5-dihydroxypentane-2,3-dione + L-homocysteine. Its function is as follows. Involved in the synthesis of autoinducer 2 (AI-2) which is secreted by bacteria and is used to communicate both the cell density and the metabolic potential of the environment. The regulation of gene expression in response to changes in cell density is called quorum sensing. Catalyzes the transformation of S-ribosylhomocysteine (RHC) to homocysteine (HC) and 4,5-dihydroxy-2,3-pentadione (DPD). In Geobacillus thermodenitrificans (strain NG80-2), this protein is S-ribosylhomocysteine lyase.